Consider the following 255-residue polypeptide: Imidazole glycerol phosphate synthase subunit HisF (255 aa).

Residues Asp12 and Asp131 contribute to the active site.

The protein belongs to the HisA/HisF family. In terms of assembly, heterodimer of HisH and HisF.

It is found in the cytoplasm. It carries out the reaction 5-[(5-phospho-1-deoxy-D-ribulos-1-ylimino)methylamino]-1-(5-phospho-beta-D-ribosyl)imidazole-4-carboxamide + L-glutamine = D-erythro-1-(imidazol-4-yl)glycerol 3-phosphate + 5-amino-1-(5-phospho-beta-D-ribosyl)imidazole-4-carboxamide + L-glutamate + H(+). It participates in amino-acid biosynthesis; L-histidine biosynthesis; L-histidine from 5-phospho-alpha-D-ribose 1-diphosphate: step 5/9. Its function is as follows. IGPS catalyzes the conversion of PRFAR and glutamine to IGP, AICAR and glutamate. The HisF subunit catalyzes the cyclization activity that produces IGP and AICAR from PRFAR using the ammonia provided by the HisH subunit. The sequence is that of Imidazole glycerol phosphate synthase subunit HisF from Ignicoccus hospitalis (strain KIN4/I / DSM 18386 / JCM 14125).